A 366-amino-acid polypeptide reads, in one-letter code: D-alanine--D-alanine ligase (366 aa).

Positions 144-347 constitute an ATP-grasp domain; that stretch reads KRLLKDAGLK…YRELIENLIE (204 aa). ATP is bound at residue 174–229; it reads KEELGLPMFIKPANQGSSVGVHKVENEEQFYSAIKDAFQFDHKLLVEEAIVGREIE. Mg(2+) contacts are provided by Asp301, Glu314, and Asn316.

It belongs to the D-alanine--D-alanine ligase family. Requires Mg(2+) as cofactor. The cofactor is Mn(2+).

The protein localises to the cytoplasm. The enzyme catalyses 2 D-alanine + ATP = D-alanyl-D-alanine + ADP + phosphate + H(+). The protein operates within cell wall biogenesis; peptidoglycan biosynthesis. Cell wall formation. The chain is D-alanine--D-alanine ligase from Oceanobacillus iheyensis (strain DSM 14371 / CIP 107618 / JCM 11309 / KCTC 3954 / HTE831).